A 467-amino-acid chain; its full sequence is Gustatory and odorant receptor 22 (467 aa).

Residues 1 to 106 (MIHTQMEDAQ…MPRTTFTWCS (106 aa)) are Cytoplasmic-facing. The helical transmembrane segment at 107-127 (KAFLWAYFIYACETVIVLVVA) threads the bilayer. Residues 128-144 (RERINKFISTSDKRFDE) lie on the Extracellular side of the membrane. Residues 145 to 165 (VIYNIIFMSIMVPHFLLPVAS) traverse the membrane as a helical segment. Residues 166–198 (WRNGSEVAKFKNMWTDFQYKYLIVTGKPIVFPK) are Cytoplasmic-facing. A helical transmembrane segment spans residues 199–219 (LYPITWTLCIVSWSLSLVIIL). At 220–238 (SQYYLQPDFQFCHTFAYYH) the chain is on the extracellular side. A helical membrane pass occupies residues 239–259 (IIAMLNGFCSLWFVNCTAFGT). Over 260–304 (ASKAFAKELTDVLATERPAAKLTEYRHLWVDLSHMMQQLGKAYSN) the chain is Cytoplasmic. A helical transmembrane segment spans residues 305 to 325 (MYGIYCLVIFFTTIIATYGSL). Topologically, residues 326–337 (SEIIEHGATYKE) are extracellular. Residues 338–358 (VGLFVIVFYCMSLLFIICNEA) form a helical membrane-spanning segment. Residues 359 to 414 (HHASKRVGLNFQERLLNVNLTAVDKATQKEVEMFLVAIDKNPPTMNLDGYANINRG) are Cytoplasmic-facing. A helical membrane pass occupies residues 415 to 435 (LITSNISFMATYLVVLMQFKL). At 436 to 467 (TLLRQSAKNAFISALKANLSRIRSLDADKVNT) the chain is on the extracellular side. Asparagine 453 is a glycosylation site (N-linked (GlcNAc...) asparagine).

Belongs to the insect chemoreceptor superfamily. Gustatory receptor (GR) family. Gr21a subfamily. Carbon dioxide-responsive neurons coexpress GPRgr22 and GPRgr24 in the maxillary palp at both larval and adult life stages.

It is found in the cell membrane. Its function is as follows. Gustatory receptor which mediates acceptance or avoidance behavior, depending on its substrates. GPRgr22 and GPRgr24 together are sufficient for olfactory carbon dioxide-chemosensation. The chain is Gustatory and odorant receptor 22 from Anopheles gambiae (African malaria mosquito).